Consider the following 366-residue polypeptide: Protein FAM110B (366 aa).

Disordered regions lie at residues 127 to 152, 163 to 182, and 216 to 252; these read SSEG…DTTD, KVYP…HVSR, and CSSS…RPSL. Residues S234 and S297 each carry the phosphoserine modification. Residues 313–333 form a disordered region; sequence DCEQSQDSNSDLRNDDSANDR. Residues 322-331 show a composition bias toward basic and acidic residues; the sequence is SDLRNDDSAN.

It belongs to the FAM110 family.

It is found in the cytoplasm. Its subcellular location is the cytoskeleton. The protein resides in the microtubule organizing center. It localises to the centrosome. The polypeptide is Protein FAM110B (Fam110b) (Mus musculus (Mouse)).